The sequence spans 932 residues: Isoleucine--tRNA ligase (932 aa).

Positions 57-67 match the 'HIGH' region motif; that stretch reads PYANGDIHIGT. Residue E559 participates in L-isoleucyl-5'-AMP binding. The 'KMSKS' region motif lies at 600 to 604; sequence KMSKS. K603 is a binding site for ATP. Residues C899, C902, C919, and C922 each coordinate Zn(2+).

The protein belongs to the class-I aminoacyl-tRNA synthetase family. IleS type 1 subfamily. As to quaternary structure, monomer. Zn(2+) is required as a cofactor.

The protein resides in the cytoplasm. The enzyme catalyses tRNA(Ile) + L-isoleucine + ATP = L-isoleucyl-tRNA(Ile) + AMP + diphosphate. Functionally, catalyzes the attachment of isoleucine to tRNA(Ile). As IleRS can inadvertently accommodate and process structurally similar amino acids such as valine, to avoid such errors it has two additional distinct tRNA(Ile)-dependent editing activities. One activity is designated as 'pretransfer' editing and involves the hydrolysis of activated Val-AMP. The other activity is designated 'posttransfer' editing and involves deacylation of mischarged Val-tRNA(Ile). In Thermoanaerobacter pseudethanolicus (strain ATCC 33223 / 39E) (Clostridium thermohydrosulfuricum), this protein is Isoleucine--tRNA ligase.